The primary structure comprises 179 residues: MTETYIKNTSKDLTSAIRGQLTYDDKVIEKIVGLALENVDGLLGVNGGFFANLKDKLVNTESVRDGVNVEVGKKQVAVDLDIVAEYQKHVPTIYDSIKSIVEEEVKRMTDLDVIEVNVKVVDIKTKEQFEAEKVSLQDKVSDMARSTSEFTSHQVENVKASVDNGVEKLQDQKAEPRVK.

The interval 147-179 (TSEFTSHQVENVKASVDNGVEKLQDQKAEPRVK) is disordered. A compositionally biased stretch (basic and acidic residues) spans 165-179 (GVEKLQDQKAEPRVK).

Belongs to the asp23 family.

The protein is Stress response regulator gls24 homolog of Streptococcus pyogenes serotype M28 (strain MGAS6180).